The primary structure comprises 424 residues: GTPase Obg (424 aa).

The region spanning 1-158 is the Obg domain; it reads MFYDQAKIYV…RNLLLELKLL (158 aa). One can recognise an OBG-type G domain in the interval 159 to 329; sequence ADVGLVGFPN…LVYAAAKALP (171 aa). GTP-binding positions include 165 to 172, 190 to 194, 212 to 215, 282 to 285, and 310 to 312; these read GFPNVGKS, FTTLV, DIPG, NKMD, and SAA. Mg(2+) contacts are provided by serine 172 and threonine 192. The OCT domain occupies 347-424; it reads TQASAPHRFE…IAGIEFEWEE (78 aa).

This sequence belongs to the TRAFAC class OBG-HflX-like GTPase superfamily. OBG GTPase family. Monomer. Requires Mg(2+) as cofactor.

Its subcellular location is the cytoplasm. Its function is as follows. An essential GTPase which binds GTP, GDP and possibly (p)ppGpp with moderate affinity, with high nucleotide exchange rates and a fairly low GTP hydrolysis rate. Plays a role in control of the cell cycle, stress response, ribosome biogenesis and in those bacteria that undergo differentiation, in morphogenesis control. The chain is GTPase Obg from Desulfitobacterium hafniense (strain Y51).